We begin with the raw amino-acid sequence, 261 residues long: Ribonuclease HII (261 aa).

The RNase H type-2 domain occupies 71-259 (QYIAGVDEVG…VKEAKLHFES (189 aa)). 3 residues coordinate a divalent metal cation: Asp77, Glu78, and Asp169.

The protein belongs to the RNase HII family. The cofactor is Mn(2+). Mg(2+) serves as cofactor.

The protein localises to the cytoplasm. It catalyses the reaction Endonucleolytic cleavage to 5'-phosphomonoester.. Its function is as follows. Endonuclease that specifically degrades the RNA of RNA-DNA hybrids. This Listeria innocua serovar 6a (strain ATCC BAA-680 / CLIP 11262) protein is Ribonuclease HII.